The primary structure comprises 114 residues: T cell receptor beta variable 6-2 (114 aa).

An N-terminal signal peptide occupies residues 1-21; it reads MSLGLLCCGAFSLLWAGPVNA. An Ig-like domain is found at 22–114; the sequence is GVTQTPKFRV…TSVYFCASSY (93 aa). C42 and C110 are disulfide-bonded. An N-linked (GlcNAc...) asparagine glycan is attached at N84.

As to quaternary structure, alpha-beta TR is a heterodimer composed of an alpha and beta chain; disulfide-linked. The alpha-beta TR is associated with the transmembrane signaling CD3 coreceptor proteins to form the TR-CD3 (TcR or TCR). The assembly of alpha-beta TR heterodimers with CD3 occurs in the endoplasmic reticulum where a single alpha-beta TR heterodimer associates with one CD3D-CD3E heterodimer, one CD3G-CD3E heterodimer and one CD247 homodimer forming a stable octameric structure. CD3D-CD3E and CD3G-CD3E heterodimers preferentially associate with TR alpha and TR beta chains, respectively. The association of the CD247 homodimer is the last step of TcR assembly in the endoplasmic reticulum and is required for transport to the cell surface.

The protein localises to the cell membrane. Functionally, v region of the variable domain of T cell receptor (TR) beta chain that participates in the antigen recognition. Alpha-beta T cell receptors are antigen specific receptors which are essential to the immune response and are present on the cell surface of T lymphocytes. Recognize peptide-major histocompatibility (MH) (pMH) complexes that are displayed by antigen presenting cells (APC), a prerequisite for efficient T cell adaptive immunity against pathogens. Binding of alpha-beta TR to pMH complex initiates TR-CD3 clustering on the cell surface and intracellular activation of LCK that phosphorylates the ITAM motifs of CD3G, CD3D, CD3E and CD247 enabling the recruitment of ZAP70. In turn ZAP70 phosphorylates LAT, which recruits numerous signaling molecules to form the LAT signalosome. The LAT signalosome propagates signal branching to three major signaling pathways, the calcium, the mitogen-activated protein kinase (MAPK) kinase and the nuclear factor NF-kappa-B (NF-kB) pathways, leading to the mobilization of transcription factors that are critical for gene expression and essential for T cell growth and differentiation. The T cell repertoire is generated in the thymus, by V-(D)-J rearrangement. This repertoire is then shaped by intrathymic selection events to generate a peripheral T cell pool of self-MH restricted, non-autoaggressive T cells. Post-thymic interaction of alpha-beta TR with the pMH complexes shapes TR structural and functional avidity. The protein is T cell receptor beta variable 6-2 of Homo sapiens (Human).